The primary structure comprises 205 residues: S-crystallin SL11 (205 aa).

A GST N-terminal domain is found at 2–80; it reads PSYTLYYFNG…YLAREFGFYG (79 aa). The region spanning 82 to 205 is the GST C-terminal domain; sequence NNMDMFKVDC…YIKKRNNTAF (124 aa).

Belongs to the GST superfamily. As to expression, lens.

In terms of biological role, S-crystallins are structural components of squids and octopi eye lens. Contains relatively little if any GST activity. The polypeptide is S-crystallin SL11 (Nototodarus sloanii (Wellington flying squid)).